The following is a 162-amino-acid chain: Phosphopantetheine adenylyltransferase (162 aa).

Residue Thr-14 coordinates substrate. ATP contacts are provided by residues 14 to 15 (TF) and His-22. Substrate-binding residues include Lys-46, Leu-78, and Arg-92. ATP-binding positions include 93–95 (GLR), Glu-103, and 128–134 (HSFISSS).

The protein belongs to the bacterial CoaD family. As to quaternary structure, homohexamer. The cofactor is Mg(2+).

It is found in the cytoplasm. The catalysed reaction is (R)-4'-phosphopantetheine + ATP + H(+) = 3'-dephospho-CoA + diphosphate. The protein operates within cofactor biosynthesis; coenzyme A biosynthesis; CoA from (R)-pantothenate: step 4/5. Reversibly transfers an adenylyl group from ATP to 4'-phosphopantetheine, yielding dephospho-CoA (dPCoA) and pyrophosphate. This is Phosphopantetheine adenylyltransferase from Xylella fastidiosa (strain M23).